Here is a 381-residue protein sequence, read N- to C-terminus: L-lactate dehydrogenase (381 aa).

The FMN hydroxy acid dehydrogenase domain occupies 1–380; it reads MIISASTDYR…TRDSLVRELG (380 aa). Residue Tyr-24 participates in substrate binding. FMN-binding residues include Ser-106 and Gln-127. Tyr-129 contacts substrate. Residue Thr-155 participates in FMN binding. Arg-164 serves as a coordination point for substrate. Lys-251 serves as a coordination point for FMN. The active-site Proton acceptor is the His-275. Arg-278 is a substrate binding site. 306–330 contacts FMN; it reads DSGIRSGLDVVRMIALGADTVLIGR.

This sequence belongs to the FMN-dependent alpha-hydroxy acid dehydrogenase family. Homotetramer. FMN is required as a cofactor.

It is found in the cell inner membrane. It carries out the reaction (S)-lactate + A = pyruvate + AH2. In terms of biological role, catalyzes the conversion of L-lactate to pyruvate. Is coupled to the respiratory chain. The polypeptide is L-lactate dehydrogenase (Pseudomonas putida (strain ATCC 700007 / DSM 6899 / JCM 31910 / BCRC 17059 / LMG 24140 / F1)).